The sequence spans 228 residues: Rab-like protein 2B (228 aa).

Residues Gly28–Ser35, Asp76–Gln80, and Asn133–Asp136 each bind GTP. The interval Leu200–Ser228 is disordered.

This sequence belongs to the small GTPase superfamily. Rab family. As to quaternary structure, interacts (in its GTP-bound form) with CEP19 (via residues 121-150); this interaction is required for its localization to the mother centriole and cilium basal body. Interacts (in its GTP-bound form) with the intraflagellar transport (IFT) complex B (via the IFT74-IFT81 heterodimer). Binding to CEP19 and the IFT74-IFT81 heterodimer is mutually exclusive. As to expression, expressed in the testis.

The protein localises to the cytoplasm. The protein resides in the cytoskeleton. It is found in the microtubule organizing center. Its subcellular location is the centrosome. It localises to the centriole. The protein localises to the cilium basal body. Functionally, small GTPase required for ciliation. Activated in a guanine nucleotide exchange factor (GEF)-independent manner via its intrinsic GDP for GTP nucleotide exchange ability. Involved in ciliary assembly by binding the intraflagellar transport (IFT) complex B from the large pool pre-docked at the base of the cilium and thus triggers its entry into the cilia. The protein is Rab-like protein 2B (RABL2B) of Homo sapiens (Human).